A 267-amino-acid polypeptide reads, in one-letter code: Cell division protein FtsQ (267 aa).

The Cytoplasmic segment spans residues 1–32 (MRKKTSSNKKNTAKKNNNISLHRKLGLIYKKT). The helical transmembrane segment at 33–53 (ILILKIVLIIFICLFAFTKYF) threads the bilayer. Over 54 to 267 (ASLKSYLKTN…DKNKYYIEKY (214 aa)) the chain is Periplasmic. The 69-residue stretch at 73–141 (FKLENVIIEG…STIYIKLFER (69 aa)) folds into the POTRA domain.

Belongs to the FtsQ/DivIB family. FtsQ subfamily.

Its subcellular location is the cell inner membrane. Essential cell division protein. The chain is Cell division protein FtsQ from Rickettsia bellii (strain RML369-C).